The sequence spans 200 residues: Large ribosomal subunit protein uL4 (200 aa).

Residues 45-64 (QKTRAEVSGGGIKPWRQKGT) form a disordered region.

The protein belongs to the universal ribosomal protein uL4 family. As to quaternary structure, part of the 50S ribosomal subunit.

One of the primary rRNA binding proteins, this protein initially binds near the 5'-end of the 23S rRNA. It is important during the early stages of 50S assembly. It makes multiple contacts with different domains of the 23S rRNA in the assembled 50S subunit and ribosome. Its function is as follows. Forms part of the polypeptide exit tunnel. The protein is Large ribosomal subunit protein uL4 of Psychrobacter cryohalolentis (strain ATCC BAA-1226 / DSM 17306 / VKM B-2378 / K5).